A 274-amino-acid polypeptide reads, in one-letter code: 2,3,4,5-tetrahydropyridine-2,6-dicarboxylate N-succinyltransferase (274 aa).

Residues arginine 104 and aspartate 141 each coordinate substrate.

The protein belongs to the transferase hexapeptide repeat family. In terms of assembly, homotrimer.

The protein resides in the cytoplasm. The catalysed reaction is (S)-2,3,4,5-tetrahydrodipicolinate + succinyl-CoA + H2O = (S)-2-succinylamino-6-oxoheptanedioate + CoA. Its pathway is amino-acid biosynthesis; L-lysine biosynthesis via DAP pathway; LL-2,6-diaminopimelate from (S)-tetrahydrodipicolinate (succinylase route): step 1/3. In Salmonella choleraesuis (strain SC-B67), this protein is 2,3,4,5-tetrahydropyridine-2,6-dicarboxylate N-succinyltransferase.